The chain runs to 336 residues: Peroxidase 11 (336 aa).

The signal sequence occupies residues 1–20 (MMRLLFVFFMVHTIFIPCFS). 4 disulfides stabilise this stretch: C39–C119, C72–C77, C125–C331, and C204–C236. Residue H70 is the Proton acceptor of the active site. Residues D71, V74, G76, D78, and S80 each contribute to the Ca(2+) site. P167 is a substrate binding site. Position 197 (H197) interacts with heme b. Residue T198 coordinates Ca(2+). N246 is a glycosylation site (N-linked (GlcNAc...) asparagine). Residues D251, T254, and D259 each contribute to the Ca(2+) site.

Belongs to the peroxidase family. Classical plant (class III) peroxidase subfamily. Requires heme b as cofactor. Ca(2+) is required as a cofactor. As to expression, expressed in roots and stems.

It localises to the secreted. It catalyses the reaction 2 a phenolic donor + H2O2 = 2 a phenolic radical donor + 2 H2O. Functionally, removal of H(2)O(2), oxidation of toxic reductants, biosynthesis and degradation of lignin, suberization, auxin catabolism, response to environmental stresses such as wounding, pathogen attack and oxidative stress. These functions might be dependent on each isozyme/isoform in each plant tissue. This chain is Peroxidase 11 (PER11), found in Arabidopsis thaliana (Mouse-ear cress).